A 668-amino-acid polypeptide reads, in one-letter code: Metastasis-associated protein MTA2 (668 aa).

Residues 1–144 (MAANMYRVGD…PVQKTLLADQ (144 aa)) enclose the BAH domain. S52 and S54 each carry phosphoserine. The 112-residue stretch at 145–256 (GEIRVGCKFQ…KAMSTLVPQG (112 aa)) folds into the ELM2 domain. K152 is subject to N6-acetyllysine. One can recognise an SANT domain in the interval 263-315 (DEMEEWSASEAMLFEEALEKYGKDFNDIRQDFLPWKSLASIVQFYYMWKTTDR). The segment at 367–394 (CESCHTTQSAQWYAWGPPNMQCRLCASC) adopts a GATA-type; atypical zinc-finger fold. The disordered stretch occupies residues 412–437 (GAARGTTEPHSRGHLSRPEAQSLSPY). A phosphoserine mark is found at S433 and S435. K460 carries the N6-acetyllysine modification. A Glycyl lysine isopeptide (Lys-Gly) (interchain with G-Cter in SUMO2 and SUMO3); alternate cross-link involves residue K492. K492 participates in a covalent cross-link: Glycyl lysine isopeptide (Lys-Gly) (interchain with G-Cter in SUMO2); alternate. A Glycyl lysine isopeptide (Lys-Gly) (interchain with G-Cter in SUMO2) cross-link involves residue K508. 2 positions are modified to N6-acetyllysine: K522 and K531. At T534 the chain carries Phosphothreonine. Glycyl lysine isopeptide (Lys-Gly) (interchain with G-Cter in SUMO2) cross-links involve residues K559 and K595. Disordered stretches follow at residues 580–599 (ASGI…LNPA) and 647–668 (PPVP…VLED).

This sequence belongs to the metastasis-associated protein family. Component of the nucleosome remodeling and deacetylase (NuRD) repressor complex, composed of core proteins MTA1, MTA2, MTA3, RBBP4, RBBP7, HDAC1, HDAC2, MBD2, MBD3, and peripherally associated proteins CDK2AP1, CDK2AP2, GATAD2A, GATAD2B, CHD3, CHD4 and CHD5. The exact stoichiometry of the NuRD complex is unknown, and some subunits such as MBD2 and MBD3, GATAD2A and GATAD2B, and CHD3, CHD4 and CHD5 define mutually exclusive NuRD complexes. Interacts with CHD3. Interacts with CHD4. Interacts with GATAD2A. Interacts with HDAC7. Interacts with MBD3. Interacts with p53/TP53. Interacts with MINT. Interacts with PIMREG. Interacts with NACC2. Interacts with ERCC6. Interacts with PWWP2B. Interacts with transcription factor BCL11A.

It localises to the nucleus. May function as a transcriptional coregulator. Acts as a component of the histone deacetylase NuRD complex which participates in the remodeling of chromatin. The sequence is that of Metastasis-associated protein MTA2 (Mta2) from Mus musculus (Mouse).